Here is a 152-residue protein sequence, read N- to C-terminus: Ninjurin-1 (152 aa).

M1 carries the N-acetylmethionine modification. The tract at residues 1-26 is disordered; sequence MDSGTEEYELNGGLPPGTPGSPDASP. Over 1 to 78 the chain is Extracellular; the sequence is MDSGTEEYEL…EQGPSFAFYV (78 aa). S21 and S25 each carry phosphoserine. Residues 26-37 form an N-terminal adhesion motif region; it reads PARWGWRHGPIN. Residues 40–69 form a required to induce plasma membrane rupture region; it reads HYASKKSAAESMLDIALLMANASQLKAVVE. Positions 44 to 55 are helix alpha1; that stretch reads KKSAAESMLDIA. Residues 58 to 74 form a helix alpha2 region; that stretch reads MANASQLKAVVEQGPSF. An N-linked (GlcNAc...) asparagine glycan is attached at N60. Residues 79–103 form a helical membrane-spanning segment; the sequence is PLVVLISISLVLQIGVGVLLIFLVK. At 104–113 the chain is on the cytoplasmic side; that stretch reads YDLNNPAKHA. A helical transmembrane segment spans residues 114–138; it reads KLDFLNNLATGLVFIIVVVNIFITA. The Extracellular segment spans residues 139-152; it reads FGVQKPLMDMAPQQ.

Belongs to the ninjurin family. Homodimer; in absence of death stimuli, forms an inactive homodimer. Homooligomer; in response to death stimuli, homooligomerizes into long, highly branched filaments and large, ring-shaped structures in the membrane. Post-translationally, cleaved by MMP9 protease to generate the Secreted ninjurin-1 form. In terms of processing, N-linked glycosylation is required for homooligomerization. Widely expressed in both adult and embryonic tissues, primarily those of epithelial origin.

Its subcellular location is the cell membrane. The protein localises to the synaptic cell membrane. The protein resides in the secreted. In response to death stimuli, homooligomerizes and disrupts membrane integrity by introducing the hydrophilic faces of alpha1 and alpha2 helices into the hydrophobic membrane. Homooligomerization and ability to mediate plasma membrane rupture is inhibited by glycine; it is unclear whether glycine directly or indirectly inhibits homooligomerization. In normal conditions, NINJ1 is autoinhibited via formation of a homodimer: in the inactive homodimer, the alpha1 and alpha2 helices (residues 44-74) form a single transmembrane region without a kink, in which hydrophilic faces of alpha1 and alpha2 helices are sequestered. In terms of biological role, effector of various programmed cell death, such as pyroptosis and necroptosis, which mediates plasma membrane rupture (cytolysis). Oligomerizes in response to death stimuli and forms ring-like structures on the plasma membrane: acts by cutting and shedding membrane disks, like a cookie cutter, leading to membrane damage and loss that cannot be repaired by the cell. Plasma membrane rupture leads to release intracellular molecules named damage-associated molecular patterns (DAMPs) that propagate the inflammatory response. Mechanistically, mediates plasma membrane rupture by introducing hydrophilic faces of 2 alpha helices into the hydrophobic membrane. Induces plasma membrane rupture downstream of Gasdermin (GSDMA, GSDMB, GSDMC, GSDMD, or GSDME) or MLKL during pyroptosis or necroptosis, respectively. Acts as an effector of PANoptosis downstream of CASP1, CASP4, CASP8 and RIPK3. Also induces plasma membrane rupture in response to cell swelling caused by osmotic stress and ferroptosis downstream of lipid peroxidation. Acts as a regulator of Toll-like receptor 4 (TLR4) signaling triggered by lipopolysaccharide (LPS) during systemic inflammation; directly binds LPS. Involved in leukocyte migration during inflammation by promoting transendothelial migration of macrophages via homotypic binding. Promotes the migration of monocytes across the brain endothelium to central nervous system inflammatory lesions. Also acts as a homophilic transmembrane adhesion molecule involved in various processes such as axonal growth, cell chemotaxis and angiogenesis. Promotes cell adhesion by mediating homophilic interactions via its extracellular N-terminal adhesion motif (N-NAM). Involved in the progression of the inflammatory stress by promoting cell-to-cell interactions between immune cells and endothelial cells. Plays a role in nerve regeneration by promoting maturation of Schwann cells. Acts as a regulator of angiogenesis. Promotes the formation of new vessels by mediating the interaction between capillary pericyte cells and endothelial cells. Promotes osteoclasts development by enhancing the survival of prefusion osteoclasts. Also involved in striated muscle growth and differentiation. Functionally, secreted form generated by cleavage, which has chemotactic activity. Acts as an anti-inflammatory mediator by promoting monocyte recruitment, thereby ameliorating atherosclerosis. The sequence is that of Ninjurin-1 from Homo sapiens (Human).